Here is a 183-residue protein sequence, read N- to C-terminus: Nucleoside triphosphate pyrophosphatase (183 aa).

Asp-71 (proton acceptor) is an active-site residue.

Belongs to the Maf family. A divalent metal cation is required as a cofactor.

Its subcellular location is the cytoplasm. The enzyme catalyses a ribonucleoside 5'-triphosphate + H2O = a ribonucleoside 5'-phosphate + diphosphate + H(+). It catalyses the reaction a 2'-deoxyribonucleoside 5'-triphosphate + H2O = a 2'-deoxyribonucleoside 5'-phosphate + diphosphate + H(+). In terms of biological role, nucleoside triphosphate pyrophosphatase. May have a dual role in cell division arrest and in preventing the incorporation of modified nucleotides into cellular nucleic acids. This is Nucleoside triphosphate pyrophosphatase from Campylobacter jejuni subsp. jejuni serotype O:6 (strain 81116 / NCTC 11828).